Here is a 68-residue protein sequence, read N- to C-terminus: Small ribosomal subunit protein bS21 (68 aa).

It belongs to the bacterial ribosomal protein bS21 family.

This chain is Small ribosomal subunit protein bS21, found in Dinoroseobacter shibae (strain DSM 16493 / NCIMB 14021 / DFL 12).